Consider the following 204-residue polypeptide: Pyridoxal 5'-phosphate synthase subunit PdxT (204 aa).

52–54 (GES) serves as a coordination point for L-glutamine. Cysteine 84 acts as the Nucleophile in catalysis. L-glutamine is bound by residues arginine 116 and 143–144 (IR). Active-site charge relay system residues include histidine 184 and glutamate 186.

It belongs to the glutaminase PdxT/SNO family. In the presence of PdxS, forms a dodecamer of heterodimers. Only shows activity in the heterodimer.

The catalysed reaction is aldehydo-D-ribose 5-phosphate + D-glyceraldehyde 3-phosphate + L-glutamine = pyridoxal 5'-phosphate + L-glutamate + phosphate + 3 H2O + H(+). It carries out the reaction L-glutamine + H2O = L-glutamate + NH4(+). It participates in cofactor biosynthesis; pyridoxal 5'-phosphate biosynthesis. Its function is as follows. Catalyzes the hydrolysis of glutamine to glutamate and ammonia as part of the biosynthesis of pyridoxal 5'-phosphate. The resulting ammonia molecule is channeled to the active site of PdxS. In Pyrobaculum aerophilum (strain ATCC 51768 / DSM 7523 / JCM 9630 / CIP 104966 / NBRC 100827 / IM2), this protein is Pyridoxal 5'-phosphate synthase subunit PdxT.